Reading from the N-terminus, the 265-residue chain is Pre-mRNA-splicing factor cwf15 (265 aa).

Disordered regions lie at residues 1–31 and 62–197; these read MTTA…ALPA and AAHF…ALEQ. Over residues 113–125 the composition is skewed to acidic residues; it reads EADEDASDSDDSV. Low complexity predominate over residues 143-155; the sequence is SNSQESVDSSNSE. A coiled-coil region spans residues 155-205; sequence ESSDEESDSEDETQQLLRELENIKQERKREQMLQEEKNRALEQEKREREIA. Positions 156–167 are enriched in acidic residues; sequence SSDEESDSEDET. Positions 172–197 are enriched in basic and acidic residues; it reads RELENIKQERKREQMLQEEKNRALEQ.

Belongs to the CWC15 family. Belongs to the 40S cdc5-associated complex (or cwf complex), a spliceosome sub-complex reminiscent of a late-stage spliceosome composed of the U2, U5 and U6 snRNAs and at least brr2, cdc5, cwf2/prp3, cwf3/syf1, cwf4/syf3, cwf5/ecm2, spp42/cwf6, cwf7/spf27, cwf8, cwf9, cwf10, cwf11, cwf12, prp45/cwf13, cwf14, cwf15, cwf16, cwf17, cwf18, cwf19, cwf20, cwf21, cwf22, cwf23, cwf24, cwf25, cwf26, cyp7/cwf27, cwf28, cwf29/ist3, lea1, msl1, prp5/cwf1, prp10, prp12/sap130, prp17, prp22, sap61, sap62, sap114, sap145, slu7, smb1, smd1, smd3, smf1, smg1 and syf2.

It is found in the nucleus. Involved in pre-mRNA splicing. The protein is Pre-mRNA-splicing factor cwf15 (cwf15) of Schizosaccharomyces pombe (strain 972 / ATCC 24843) (Fission yeast).